The chain runs to 149 residues: Calmodulin-B (149 aa).

Residue Ala2 is modified to N-acetylalanine. EF-hand domains lie at 8 to 43 (EQIAEFKEAFSLFDKDGDGTITTKELGTVMRSLGQN), 44 to 79 (PTEAELQDMINEVDADGNGTIDFPEFLTMMARKMKE), 81 to 116 (DSEEEIREAFRVFDKDGNGFISAAELRHVMTNLGEK), and 117 to 149 (LTDEEVDEMIREADIDGDGQVNYEEFVTMMTCK). The Ca(2+) site is built by Asp21, Asp23, Asp25, Thr27, Glu32, Asp57, Asp59, Asn61, Thr63, Glu68, Asp94, Asp96, Asn98, and Glu105. Lys116 bears the N6,N6,N6-trimethyllysine mark. Residues Asp130, Asp132, Asp134, Gln136, and Glu141 each coordinate Ca(2+).

This sequence belongs to the calmodulin family.

Functionally, calmodulin mediates the control of a large number of enzymes, ion channels and other proteins by Ca(2+). Among the enzymes to be stimulated by the calmodulin-Ca(2+) complex are a number of protein kinases and phosphatases. This is Calmodulin-B from Halocynthia roretzi (Sea squirt).